We begin with the raw amino-acid sequence, 494 residues long: Endoglucanase 22 (494 aa).

An N-terminal signal peptide occupies residues M1 to S21. Catalysis depends on D76, which acts as the Nucleophile. Residue H413 is part of the active site. N468 is a glycosylation site (N-linked (GlcNAc...) asparagine). The active site involves E473.

The protein belongs to the glycosyl hydrolase 9 (cellulase E) family.

The protein resides in the secreted. It catalyses the reaction Endohydrolysis of (1-&gt;4)-beta-D-glucosidic linkages in cellulose, lichenin and cereal beta-D-glucans.. This is Endoglucanase 22 (GH9B16) from Arabidopsis thaliana (Mouse-ear cress).